The following is a 101-amino-acid chain: Small ribosomal subunit protein uS14 (101 aa).

The protein belongs to the universal ribosomal protein uS14 family. In terms of assembly, part of the 30S ribosomal subunit. Contacts proteins S3 and S10.

In terms of biological role, binds 16S rRNA, required for the assembly of 30S particles and may also be responsible for determining the conformation of the 16S rRNA at the A site. The chain is Small ribosomal subunit protein uS14 from Francisella tularensis subsp. novicida (strain U112).